The following is a 690-amino-acid chain: Polyribonucleotide nucleotidyltransferase (690 aa).

Residues D482 and D488 each contribute to the Mg(2+) site. The 60-residue stretch at P549 to I608 folds into the KH domain. In terms of domain architecture, S1 motif spans D618 to K686.

Belongs to the polyribonucleotide nucleotidyltransferase family. Component of the RNA degradosome, which is a multiprotein complex involved in RNA processing and mRNA degradation. Requires Mg(2+) as cofactor.

The protein resides in the cytoplasm. The enzyme catalyses RNA(n+1) + phosphate = RNA(n) + a ribonucleoside 5'-diphosphate. Functionally, involved in mRNA degradation. Catalyzes the phosphorolysis of single-stranded polyribonucleotides processively in the 3'- to 5'-direction. This Acidithiobacillus ferrooxidans (strain ATCC 23270 / DSM 14882 / CIP 104768 / NCIMB 8455) (Ferrobacillus ferrooxidans (strain ATCC 23270)) protein is Polyribonucleotide nucleotidyltransferase.